A 50-amino-acid polypeptide reads, in one-letter code: uncharacterized protein (50 aa).

Residues 1 to 50 (MKTGFWQQVLPKRAGRRKEHPVQYMPHKKEENATGLMNPSLHTSHSAILK) are disordered. The segment covering 35-50 (GLMNPSLHTSHSAILK) has biased composition (polar residues).

This is an uncharacterized protein from Treponema pallidum (strain Nichols).